The sequence spans 94 residues: Acylphosphatase (94 aa).

The Acylphosphatase-like domain occupies Ala7–Arg94. Active-site residues include Arg22 and Asn40.

Belongs to the acylphosphatase family.

It carries out the reaction an acyl phosphate + H2O = a carboxylate + phosphate + H(+). The sequence is that of Acylphosphatase (acyP) from Sinorhizobium medicae (strain WSM419) (Ensifer medicae).